We begin with the raw amino-acid sequence, 417 residues long: Blood group Rh(D) polypeptide (417 aa).

11 helical membrane-spanning segments follow: residues 12 to 32, 44 to 64, 77 to 97, 107 to 127, 130 to 150, 167 to 187, 203 to 223, 238 to 258, 287 to 307, 334 to 354, and 358 to 378; these read CLPL…YFFT, LVAS…GLGF, VAFN…LDGF, VITL…LISV, VLGK…VTAL, MNMM…AWCL, TIPS…WPSF, VFNT…GSSL, LIPS…ISVG, LLGL…TVGA, and MIGF…VIAL.

This sequence belongs to the ammonium transporter (TC 2.A.49) family. Rh subfamily. Post-translationally, palmitoylated. Restricted to tissues or cell lines expressing erythroid characters.

The protein localises to the cell membrane. May be part of an oligomeric complex which is likely to have a transport or channel function in the erythrocyte membrane. The sequence is that of Blood group Rh(D) polypeptide (RHD) from Homo sapiens (Human).